Consider the following 263-residue polypeptide: Endonuclease 8 (263 aa).

Catalysis depends on Pro2, which acts as the Schiff-base intermediate with DNA. Glu3 functions as the Proton donor in the catalytic mechanism. Catalysis depends on Lys53, which acts as the Proton donor; for beta-elimination activity. 3 residues coordinate DNA: Gln70, Arg125, and Asn169. The FPG-type zinc finger occupies 229 to 263 (KVFHRDGEPCERCGSIIEKTTLSSRPFYWCPGCQH). Catalysis depends on Arg253, which acts as the Proton donor; for delta-elimination activity.

This sequence belongs to the FPG family. The cofactor is Zn(2+).

The catalysed reaction is 2'-deoxyribonucleotide-(2'-deoxyribose 5'-phosphate)-2'-deoxyribonucleotide-DNA = a 3'-end 2'-deoxyribonucleotide-(2,3-dehydro-2,3-deoxyribose 5'-phosphate)-DNA + a 5'-end 5'-phospho-2'-deoxyribonucleoside-DNA + H(+). In terms of biological role, involved in base excision repair of DNA damaged by oxidation or by mutagenic agents. Acts as a DNA glycosylase that recognizes and removes damaged bases. Has a preference for oxidized pyrimidines, such as thymine glycol, 5,6-dihydrouracil and 5,6-dihydrothymine. Has AP (apurinic/apyrimidinic) lyase activity and introduces nicks in the DNA strand. Cleaves the DNA backbone by beta-delta elimination to generate a single-strand break at the site of the removed base with both 3'- and 5'-phosphates. The sequence is that of Endonuclease 8 from Escherichia coli O9:H4 (strain HS).